The following is a 372-amino-acid chain: Ligninase A (372 aa).

Residues 1–21 (MAFKQLVAAISLALSLTTANA) form the signal peptide. Positions 22–28 (AVVKEKR) are excised as a propeptide. 4 disulfides stabilise this stretch: Cys-31–Cys-43, Cys-42–Cys-313, Cys-62–Cys-148, and Cys-277–Cys-345. His-75 (proton acceptor) is an active-site residue. Ca(2+)-binding residues include Asp-76, Gly-94, Asp-96, and Ser-98. His-204 serves as a coordination point for heme b. The Ca(2+) site is built by Ser-205, Asp-222, Thr-224, Ile-227, and Asp-229. Residue Asn-285 is glycosylated (N-linked (GlcNAc...) asparagine).

Belongs to the peroxidase family. Ligninase subfamily. Requires heme b as cofactor. Ca(2+) is required as a cofactor.

It carries out the reaction 1-(3,4-dimethoxyphenyl)-2-(2-methoxyphenoxy)propane-1,3-diol + H2O2 = 3,4-dimethoxybenzaldehyde + guaiacol + glycolaldehyde + H2O. It catalyses the reaction 2 (3,4-dimethoxyphenyl)methanol + H2O2 = 2 (3,4-dimethoxyphenyl)methanol radical + 2 H2O. Its pathway is secondary metabolite metabolism; lignin degradation. Its function is as follows. Depolymerization of lignin. Catalyzes the C(alpha)-C(beta) cleavage of the propyl side chains of lignin. This Phanerodontia chrysosporium (White-rot fungus) protein is Ligninase A (LIPA).